Consider the following 406-residue polypeptide: Cysteine desulfurase (406 aa).

The residue at position 226 (Lys-226) is an N6-(pyridoxal phosphate)lysine. Residue Cys-364 is the Cysteine persulfide intermediate of the active site.

This sequence belongs to the class-V pyridoxal-phosphate-dependent aminotransferase family. Csd subfamily. Homodimer. Interacts with SufE and the SufBCD complex composed of SufB, SufC and SufD. The interaction with SufE is required to mediate the direct transfer of the sulfur atom from the S-sulfanylcysteine. Pyridoxal 5'-phosphate serves as cofactor.

It is found in the cytoplasm. The catalysed reaction is (sulfur carrier)-H + L-cysteine = (sulfur carrier)-SH + L-alanine. The enzyme catalyses L-selenocysteine + AH2 = hydrogenselenide + L-alanine + A + H(+). Its pathway is cofactor biosynthesis; iron-sulfur cluster biosynthesis. Cysteine desulfurases mobilize the sulfur from L-cysteine to yield L-alanine, an essential step in sulfur metabolism for biosynthesis of a variety of sulfur-containing biomolecules. Component of the suf operon, which is activated and required under specific conditions such as oxidative stress and iron limitation. Acts as a potent selenocysteine lyase in vitro, that mobilizes selenium from L-selenocysteine. Selenocysteine lyase activity is however unsure in vivo. This chain is Cysteine desulfurase, found in Shigella sonnei (strain Ss046).